The sequence spans 639 residues: Threonine--tRNA ligase (639 aa).

The region spanning Met1 to Thr61 is the TGS domain. The tract at residues Asp242 to Pro533 is catalytic. Zn(2+) contacts are provided by Cys333, His384, and His510.

Belongs to the class-II aminoacyl-tRNA synthetase family. Homodimer. Zn(2+) is required as a cofactor.

It localises to the cytoplasm. The catalysed reaction is tRNA(Thr) + L-threonine + ATP = L-threonyl-tRNA(Thr) + AMP + diphosphate + H(+). Catalyzes the attachment of threonine to tRNA(Thr) in a two-step reaction: L-threonine is first activated by ATP to form Thr-AMP and then transferred to the acceptor end of tRNA(Thr). Also edits incorrectly charged L-seryl-tRNA(Thr). In Acidovorax ebreus (strain TPSY) (Diaphorobacter sp. (strain TPSY)), this protein is Threonine--tRNA ligase.